We begin with the raw amino-acid sequence, 1492 residues long: ATP-binding cassette sub-family C member 10 (1492 aa).

The next 9 helical transmembrane spans lie at 32 to 52 (LVLSALPHALLAVLSACYLGT), 70 to 90 (LAASFLLSVFPLLDLLPVALP), 102 to 122 (VLAGCVAAVAWISHSLALWVL), 133 to 153 (PLALALVALLPAPALVLTVLW), 172 to 192 (LCLLILQLAALLAYALGWAAP), 293 to 313 (LVGTMLGFSGPLLLSLLVGFL), 320 to 340 (LSHGLLYALGLAGGAVLGAVL), 391 to 411 (LLNFAGSFHEAWGLPLQLAIT), and 414 to 434 (LLYQQVGVAFVGGLILALLLV). An ABC transmembrane type-1 1 domain is found at 285–563 (YLALGLLKLV…FPWVINGLLE (279 aa)). T463 is modified (phosphothreonine). S467 carries the post-translational modification Phosphoserine. Transmembrane regions (helical) follow at residues 507–527 (VYLWAALPVVISIVIFITYVL) and 538–558 (FTALALVRMLILPLNNFPWVI). An ABC transporter 1 domain is found at 598–824 (LELHGALFSW…VQAVPKAWAE (227 aa)). Residue 633-640 (GKVGCGKS) participates in ATP binding. Residues 825 to 860 (NGQESDSATAQSVQNPEKTKEGLEEEQSTSGRLLQE) are disordered. Residues 826 to 840 (GQESDSATAQSVQNP) are compositionally biased toward polar residues. The next 6 membrane-spanning stretches (helical) occupy residues 875-895 (AYWKAVGQGLALAILFSLLLM), 933-953 (LFSPQLLLFSPGNLYIPVFPL), 974-994 (IAGVNSLCTLLRAVLFAAGTL), 1051-1071 (AGLLGLLAVLGSGLPWLLLLL), 1153-1173 (IRLQLMGAAVVSAIAGIALVQ), and 1182-1202 (GLVGLSLSYALSLTGLLSGLV). Positions 885-1210 (ALAILFSLLL…LVSSFTQTEA (326 aa)) constitute an ABC transmembrane type-1 2 domain. In terms of domain architecture, ABC transporter 2 spans 1246–1479 (VEFQDVVLAY…PHSLFQQLLQ (234 aa)). 1280 to 1287 (GRTGSGKS) is an ATP binding site.

It belongs to the ABC transporter superfamily. ABCC family. Conjugate transporter (TC 3.A.1.208) subfamily. In testis, localized to peritubular myoid cells, Leydig cells, along the basal membrane of Sertoli cells, moderately in the adluminal compartment of the seminiferous tubules, and in vascular endothelial cells. As to expression, specifically expressed in spleen. In terms of tissue distribution, widely expressed.

The protein localises to the cell membrane. It is found in the basolateral cell membrane. The protein resides in the basal cell membrane. It catalyses the reaction ATP + H2O + xenobioticSide 1 = ADP + phosphate + xenobioticSide 2.. It carries out the reaction an S-substituted glutathione(in) + ATP + H2O = an S-substituted glutathione(out) + ADP + phosphate + H(+). The enzyme catalyses 17beta-estradiol 17-O-(beta-D-glucuronate)(in) + ATP + H2O = 17beta-estradiol 17-O-(beta-D-glucuronate)(out) + ADP + phosphate + H(+). The catalysed reaction is leukotriene C4(in) + ATP + H2O = leukotriene C4(out) + ADP + phosphate + H(+). ATP-dependent transporter of the ATP-binding cassette (ABC) family that actively extrudes physiological compounds, and xenobiotics from cells. Lipophilic anion transporter that mediates ATP-dependent transport of glucuronide conjugates such as estradiol-17-beta-o-glucuronide and GSH conjugates such as leukotriene C4 (LTC4). May contribute to regulate the transport of organic compounds in testes across the blood-testis-barrier. Mediates multidrug resistance (MDR) in cancer cells by preventing the intracellular accumulation of certain antitumor drugs, such as, docetaxel and paclitaxel. Does not transport glycocholic acid, taurocholic acid, MTX, folic acid, cAMP, or cGMP. In Homo sapiens (Human), this protein is ATP-binding cassette sub-family C member 10 (ABCC10).